Reading from the N-terminus, the 207-residue chain is Cilia- and flagella-associated protein 418 (207 aa).

Residues 1 to 75 (MAEDLDELLD…LINEILEEPN (75 aa)) are required for interaction with FAM161A. A disordered region spans residues 26 to 52 (MVEQPKGCGGGTHSSDRNQAKAKETLR). Basic and acidic residues predominate over residues 39 to 52 (SSDRNQAKAKETLR).

Interacts (via N-terminus) with FAM161A (via central region); the interaction is direct. In terms of tissue distribution, widely expressed, with highest levels in heart and brain. Also expressed in the retina (at protein level).

Its subcellular location is the cytoplasm. It localises to the photoreceptor inner segment. Functionally, may be involved in photoreceptor outer segment disk morphogenesis. The sequence is that of Cilia- and flagella-associated protein 418 from Homo sapiens (Human).